The primary structure comprises 354 residues: Malate dehydrogenase 2, peroxisomal (354 aa).

The segment at 10-18 (RIARISAHL) is peroxisomal targeting signal PTS2. Residues 49 to 55 (GAAGGIG) and D75 contribute to the NAD(+) site. The substrate site is built by R122 and R128. NAD(+) contacts are provided by residues N135 and 158-160 (ISN). Substrate contacts are provided by N160 and R194. The Proton acceptor role is filled by H218. M269 is a binding site for NAD(+).

The protein belongs to the LDH/MDH superfamily. MDH type 1 family. In terms of assembly, homodimer. As to expression, expressed in rosette leaves.

It is found in the peroxisome. It catalyses the reaction (S)-malate + NAD(+) = oxaloacetate + NADH + H(+). In terms of biological role, catalyzes a reversible NAD-dependent dehydrogenase reaction involved in central metabolism and redox homeostasis between organelle compartments. Peroxisomal NAD-dependent malate dehydrogenase involved in fatty acid beta-oxidation. Reoxidizes NADH from the beta-oxidation and provides NAD for the conversion of fatty acyl-CoA to acetyl-CoA. Does not participate directly in the glyoxylate cycle. Required for maintenance of photosynthetic rates under photorespiratory conditions, and carbon flow during photorespiration. Supplies NADH reductant to the peroxisomal hydroxypyruvate reductase (HPR), which reduces hydroxypyruvate into glycerate in the photorespiratory cycle. The chain is Malate dehydrogenase 2, peroxisomal from Arabidopsis thaliana (Mouse-ear cress).